A 207-amino-acid polypeptide reads, in one-letter code: Interferon kappa (207 aa).

A signal peptide spans 1-27 (MSTKPDMIQKCLWLEILMGIFIAGTLS). 2 disulfides stabilise this stretch: Cys30/Cys128 and Cys59/Cys181. The stretch at 118 to 148 (LDQQAEYLNQCLEEDKNENEDMKEMKENEMK) forms a coiled coil.

It belongs to the alpha/beta interferon family. Expressed in keratinocytes, monocytes and in resting dendritic cells.

It localises to the secreted. Functionally, may play a role in the regulation of immune cell function. Cytokine that imparts cellular protection against viral infection in a species-specific manner. Activates the interferon-stimulated response element signaling pathway. It is able to directly modulate cytokine release from monocytes and dendritic cells. Binds heparin. This is Interferon kappa (IFNK) from Homo sapiens (Human).